The primary structure comprises 388 residues: Succinate--CoA ligase [ADP-forming] subunit beta (388 aa).

The 236-residue stretch at 9-244 (KEILRKFGVA…PDEEDPKETQ (236 aa)) folds into the ATP-grasp domain. ATP is bound by residues lysine 46, 53 to 55 (GRG), glutamate 99, cysteine 102, and glutamate 107. Mg(2+)-binding residues include asparagine 199 and aspartate 213. Residues asparagine 264 and 321–323 (GIM) contribute to the substrate site.

This sequence belongs to the succinate/malate CoA ligase beta subunit family. In terms of assembly, heterotetramer of two alpha and two beta subunits. Mg(2+) is required as a cofactor.

The enzyme catalyses succinate + ATP + CoA = succinyl-CoA + ADP + phosphate. The catalysed reaction is GTP + succinate + CoA = succinyl-CoA + GDP + phosphate. The protein operates within carbohydrate metabolism; tricarboxylic acid cycle; succinate from succinyl-CoA (ligase route): step 1/1. In terms of biological role, succinyl-CoA synthetase functions in the citric acid cycle (TCA), coupling the hydrolysis of succinyl-CoA to the synthesis of either ATP or GTP and thus represents the only step of substrate-level phosphorylation in the TCA. The beta subunit provides nucleotide specificity of the enzyme and binds the substrate succinate, while the binding sites for coenzyme A and phosphate are found in the alpha subunit. This Anaeromyxobacter dehalogenans (strain 2CP-C) protein is Succinate--CoA ligase [ADP-forming] subunit beta.